Reading from the N-terminus, the 265-residue chain is 3-methyl-2-oxobutanoate hydroxymethyltransferase (265 aa).

D44 and D83 together coordinate Mg(2+). 3-methyl-2-oxobutanoate-binding positions include 44 to 45 (DS), D83, and K113. E115 lines the Mg(2+) pocket. Catalysis depends on E182, which acts as the Proton acceptor.

This sequence belongs to the PanB family. Homodecamer; pentamer of dimers. It depends on Mg(2+) as a cofactor.

The protein localises to the cytoplasm. It carries out the reaction 3-methyl-2-oxobutanoate + (6R)-5,10-methylene-5,6,7,8-tetrahydrofolate + H2O = 2-dehydropantoate + (6S)-5,6,7,8-tetrahydrofolate. It functions in the pathway cofactor biosynthesis; (R)-pantothenate biosynthesis; (R)-pantoate from 3-methyl-2-oxobutanoate: step 1/2. Functionally, catalyzes the reversible reaction in which hydroxymethyl group from 5,10-methylenetetrahydrofolate is transferred onto alpha-ketoisovalerate to form ketopantoate. This chain is 3-methyl-2-oxobutanoate hydroxymethyltransferase, found in Aquifex aeolicus (strain VF5).